We begin with the raw amino-acid sequence, 354 residues long: Ornithine carbamoyltransferase, catabolic (354 aa).

Carbamoyl phosphate contacts are provided by residues Ser67–Thr70, Gln94, Arg118, and His145–Gln148. Residues Asn177, Asp241, and Ser245–Met246 contribute to the L-ornithine site. Residues Cys284–Leu285 and Arg329 each bind carbamoyl phosphate.

It belongs to the aspartate/ornithine carbamoyltransferase superfamily. OTCase family.

The protein localises to the cytoplasm. It carries out the reaction carbamoyl phosphate + L-ornithine = L-citrulline + phosphate + H(+). Its pathway is amino-acid degradation; L-arginine degradation via ADI pathway; carbamoyl phosphate from L-arginine: step 2/2. Functionally, reversibly catalyzes the transfer of the carbamoyl group from carbamoyl phosphate (CP) to the N(epsilon) atom of ornithine (ORN) to produce L-citrulline. The polypeptide is Ornithine carbamoyltransferase, catabolic (arcB) (Lactococcus lactis subsp. lactis (strain IL1403) (Streptococcus lactis)).